A 690-amino-acid polypeptide reads, in one-letter code: Glycine--tRNA ligase 1, mitochondrial (690 aa).

The transit peptide at 1–24 (MSFFNISRRFYSQIVKKSVKIKRM) directs the protein to the mitochondrion. Serine 25 is modified (N-acetylserine). Phosphoserine is present on serine 226. Position 251 (glutamate 251) interacts with glycine. ATP is bound by residues 283–285 (RNE) and 294–295 (RV). Glutamate 302 is a binding site for glycine. 410–411 (EC) provides a ligand contact to ATP. Serine 476 and serine 528 each carry phosphoserine. 531–533 (EPS) is a binding site for glycine. Arginine 538 provides a ligand contact to ATP. At threonine 689 the chain carries Phosphothreonine.

The protein belongs to the class-II aminoacyl-tRNA synthetase family. Homodimer.

It is found in the cytoplasm. It localises to the mitochondrion matrix. It catalyses the reaction tRNA(Gly) + glycine + ATP = glycyl-tRNA(Gly) + AMP + diphosphate. It carries out the reaction 2 ATP + H(+) = P(1),P(4)-bis(5'-adenosyl) tetraphosphate + diphosphate. Functionally, catalyzes the ATP-dependent ligation of glycine to the 3'-end of its cognate tRNA, via the formation of an aminoacyl-adenylate intermediate (Gly-AMP). Also produces diadenosine tetraphosphate (Ap4A), a universal pleiotropic signaling molecule needed for cell regulation pathways, by direct condensation of 2 ATPs. Thereby, may play a special role in Ap4A homeostasis. The chain is Glycine--tRNA ligase 1, mitochondrial (GRS1) from Saccharomyces cerevisiae (strain ATCC 204508 / S288c) (Baker's yeast).